The primary structure comprises 237 residues: Dihydroceramide fatty acyl 2-hydroxylase FAH1 (237 aa).

The next 2 membrane-spanning stretches (helical) occupy residues 50-70 and 80-100; these read LTLTVWWAVPVIWLPVVVWCI and LPEIVPIVVMGIFIWTFFEYV. Zn(2+) contacts are provided by His102, His107, His123, His126, and His127. The next 2 membrane-spanning stretches (helical) occupy residues 137–157 and 164–184; these read VFPPTATAILCFPFWNIAKAI and PALFGGGMLGYVMYDVTHYYL. His181, His185, His201, His204, and His205 together coordinate Zn(2+).

This sequence belongs to the sterol desaturase family. In terms of assembly, interacts with CYTB5-A, CYTB5-B, CYTB5-C and CYTB5-D. Interacts indirectly with BI-1 via CYTB5-D. Requires Zn(2+) as cofactor. Expressed in leaves, roots, flowers and seeds.

The protein resides in the endoplasmic reticulum membrane. The enzyme catalyses an N-(1,2-saturated acyl)sphinganine + 2 Fe(II)-[cytochrome b5] + O2 + 2 H(+) = an N-[(2'R)-hydroxyacyl]sphinganine + 2 Fe(III)-[cytochrome b5] + H2O. Its function is as follows. Fatty acid 2-hydroxylase involved in the alpha-hydroxylation of sphingolipid-associated very long-chain fatty acids (VLCFA). Probably involved in the resistance response to oxidative stress. This chain is Dihydroceramide fatty acyl 2-hydroxylase FAH1, found in Arabidopsis thaliana (Mouse-ear cress).